A 170-amino-acid polypeptide reads, in one-letter code: Adenine phosphoribosyltransferase (170 aa).

This sequence belongs to the purine/pyrimidine phosphoribosyltransferase family. As to quaternary structure, homodimer.

Its subcellular location is the cytoplasm. It catalyses the reaction AMP + diphosphate = 5-phospho-alpha-D-ribose 1-diphosphate + adenine. It participates in purine metabolism; AMP biosynthesis via salvage pathway; AMP from adenine: step 1/1. Functionally, catalyzes a salvage reaction resulting in the formation of AMP, that is energically less costly than de novo synthesis. The chain is Adenine phosphoribosyltransferase from Prochlorococcus marinus (strain AS9601).